Here is a 294-residue protein sequence, read N- to C-terminus: FAD-dependent monooxygenase SAT1 (294 aa).

Position 108 (Asp108) interacts with FAD.

The protein belongs to the paxM FAD-dependent monooxygenase family. FAD is required as a cofactor.

The protein operates within mycotoxin biosynthesis. FAD-dependent monooxygenase; part of the satratoxin SC1 cluster involved in the biosynthesis of satratoxins, trichothecene mycotoxins that are associated with human food poisonings. Satratoxins are suggested to be made by products of multiple gene clusters (SC1, SC2 and SC3) that encode 21 proteins in all, including polyketide synthases, acetyltransferases, and other enzymes expected to modify the trichothecene skeleton. SC1 encodes 10 proteins, SAT1 to SAT10. The largest are SAT8, which encodes a putative polyketide synthase (PKS) with a conventional non-reducing architecture, and SAT10, a putative protein containing four ankyrin repeats and thus may be involved in protein scaffolding. The putative short-chain reductase SAT3 may assist the PKS in some capacity. SAT6 contains a secretory lipase domain and acts probably as a trichothecene esterase. SAT5 encodes a putative acetyltransferase, and so, with SAT6, may affect endogenous protection from toxicity. The probable transcription factor SAT9 may regulate the expression of the SC1 cluster. SC2 encodes proteins SAT11 to SAT16, the largest of which encodes the putative reducing PKS SAT13. SAT11 is a cytochrome P450 monooxygenase, while SAT14 and SAT16 are probable acetyltransferases. The SC2 cluster may be regulated by the transcription factor SAT15. SC3 is a small cluster that encodes 5 proteins, SAT17 to SAT21. SAT21 is a putative MFS-type transporter which may have a role in exporting secondary metabolites. The four other proteins putatively encoded in SC3 include the taurine hydroxylase-like protein SAT17, the O-methyltransferase SAT18, the acetyltransferase SAT19, and the Cys6-type zinc finger SAT20, the latter being probably involved in regulation of SC3 expression. This is FAD-dependent monooxygenase SAT1 from Stachybotrys chartarum (strain CBS 109288 / IBT 7711) (Toxic black mold).